The primary structure comprises 380 residues: Succinyl-diaminopimelate desuccinylase (380 aa).

H69 contributes to the Zn(2+) binding site. D71 is an active-site residue. D102 lines the Zn(2+) pocket. The active-site Proton acceptor is E135. Residues E136, E164, and H353 each coordinate Zn(2+).

The protein belongs to the peptidase M20A family. DapE subfamily. In terms of assembly, homodimer. The cofactor is Zn(2+). Requires Co(2+) as cofactor.

It catalyses the reaction N-succinyl-(2S,6S)-2,6-diaminopimelate + H2O = (2S,6S)-2,6-diaminopimelate + succinate. Its pathway is amino-acid biosynthesis; L-lysine biosynthesis via DAP pathway; LL-2,6-diaminopimelate from (S)-tetrahydrodipicolinate (succinylase route): step 3/3. In terms of biological role, catalyzes the hydrolysis of N-succinyl-L,L-diaminopimelic acid (SDAP), forming succinate and LL-2,6-diaminopimelate (DAP), an intermediate involved in the bacterial biosynthesis of lysine and meso-diaminopimelic acid, an essential component of bacterial cell walls. This Cereibacter sphaeroides (strain ATCC 17029 / ATH 2.4.9) (Rhodobacter sphaeroides) protein is Succinyl-diaminopimelate desuccinylase.